Here is a 149-residue protein sequence, read N- to C-terminus: Heavy metal-associated isoprenylated plant protein 21 (149 aa).

The HMA domain maps to 25-88 (LQTVDIKVKM…RVKSTGKKAE (64 aa)). 2 residues coordinate a metal cation: C36 and C39. Position 146 is a cysteine methyl ester (C146). C146 carries S-farnesyl cysteine lipidation. Positions 147–149 (SIM) are cleaved as a propeptide — removed in mature form.

This sequence belongs to the HIPP family. As to quaternary structure, interacts with ZHD11/HB29. As to expression, expressed at low levels in leaves and sepals.

It is found in the membrane. Heavy-metal-binding protein. Binds cadmium. May be involved in cadmium transport and play a role in cadmium detoxification. In Arabidopsis thaliana (Mouse-ear cress), this protein is Heavy metal-associated isoprenylated plant protein 21.